Reading from the N-terminus, the 349-residue chain is Isopentenyl-diphosphate delta-isomerase (349 aa).

6-7 serves as a coordination point for substrate; that stretch reads RK. FMN-binding positions include 62–64, Ser93, and Asn122; that span reads AMT. A substrate-binding site is contributed by Gln152. Position 153 (Glu153) interacts with Mg(2+). Residues Lys184, Thr214, 258 to 259, and 280 to 281 each bind FMN; these read GG and AG.

It belongs to the IPP isomerase type 2 family. Homooctamer. Dimer of tetramers. Requires FMN as cofactor. It depends on NADPH as a cofactor. The cofactor is Mg(2+).

The protein localises to the cytoplasm. The enzyme catalyses isopentenyl diphosphate = dimethylallyl diphosphate. Functionally, involved in the biosynthesis of isoprenoids. Catalyzes the 1,3-allylic rearrangement of the homoallylic substrate isopentenyl (IPP) to its allylic isomer, dimethylallyl diphosphate (DMAPP). The polypeptide is Isopentenyl-diphosphate delta-isomerase (Bacillus cereus (strain AH187)).